A 156-amino-acid chain; its full sequence is Ribosomal RNA large subunit methyltransferase H (156 aa).

S-adenosyl-L-methionine contacts are provided by residues L73, G104, and 123–128 (LSALTL).

It belongs to the RNA methyltransferase RlmH family. In terms of assembly, homodimer.

It localises to the cytoplasm. The catalysed reaction is pseudouridine(1915) in 23S rRNA + S-adenosyl-L-methionine = N(3)-methylpseudouridine(1915) in 23S rRNA + S-adenosyl-L-homocysteine + H(+). In terms of biological role, specifically methylates the pseudouridine at position 1915 (m3Psi1915) in 23S rRNA. This chain is Ribosomal RNA large subunit methyltransferase H, found in Shewanella woodyi (strain ATCC 51908 / MS32).